Consider the following 636-residue polypeptide: Biosynthetic arginine decarboxylase (636 aa).

Lysine 101 carries the post-translational modification N6-(pyridoxal phosphate)lysine. Position 286 to 296 (286 to 296 (FDVGGGLAVDY)) interacts with substrate.

Belongs to the Orn/Lys/Arg decarboxylase class-II family. SpeA subfamily. Mg(2+) serves as cofactor. Requires pyridoxal 5'-phosphate as cofactor.

The catalysed reaction is L-arginine + H(+) = agmatine + CO2. It functions in the pathway amine and polyamine biosynthesis; agmatine biosynthesis; agmatine from L-arginine: step 1/1. Catalyzes the biosynthesis of agmatine from arginine. This chain is Biosynthetic arginine decarboxylase, found in Shewanella amazonensis (strain ATCC BAA-1098 / SB2B).